A 310-amino-acid chain; its full sequence is Acetylglutamate kinase (310 aa).

Residues 70–71 (GG), Arg-92, and Asn-191 each bind substrate.

Belongs to the acetylglutamate kinase family. ArgB subfamily.

It localises to the cytoplasm. The catalysed reaction is N-acetyl-L-glutamate + ATP = N-acetyl-L-glutamyl 5-phosphate + ADP. It functions in the pathway amino-acid biosynthesis; L-arginine biosynthesis; N(2)-acetyl-L-ornithine from L-glutamate: step 2/4. In terms of biological role, catalyzes the ATP-dependent phosphorylation of N-acetyl-L-glutamate. In Corynebacterium diphtheriae (strain ATCC 700971 / NCTC 13129 / Biotype gravis), this protein is Acetylglutamate kinase.